The following is a 124-amino-acid chain: Cytochrome c2 (124 aa).

The residue at position 1 (Q1) is a Pyrrolidone carboxylic acid. Heme c is bound by residues C16, C19, H20, and M85.

Belongs to the cytochrome c family. Post-translationally, binds 1 heme c group covalently per subunit.

It localises to the periplasm. In terms of biological role, cytochrome c2 is found mainly in purple, non-sulfur, photosynthetic bacteria where it functions as the electron donor to the oxidized bacteriochlorophyll in the photophosphorylation pathway. However, it may also have a role in the respiratory chain and is found in some non-photosynthetic bacteria. The chain is Cytochrome c2 from Afifella marina (Rhodobium marinum).